A 952-amino-acid chain; its full sequence is UPF0182 protein SRU_2225 (952 aa).

7 helical membrane-spanning segments follow: residues 12-32 (ILLG…GLVV), 52-72 (AQVL…GGNF), 109-129 (LGYV…SGRW), 168-188 (AVVG…VIAG), 207-227 (LGAN…LDLY), 247-267 (VVIP…GLVG), and 277-297 (LLGI…VLAP). The segment at 917–952 (VPLPDTTGTVPPPTSSDTTGTMTAPTGDVSEVTGGS) is disordered. A compositionally biased stretch (polar residues) spans 931 to 940 (SSDTTGTMTA).

Belongs to the UPF0182 family.

The protein localises to the cell membrane. The sequence is that of UPF0182 protein SRU_2225 from Salinibacter ruber (strain DSM 13855 / M31).